A 186-amino-acid chain; its full sequence is ATP synthase subunit delta (186 aa).

The protein belongs to the ATPase delta chain family. F-type ATPases have 2 components, F(1) - the catalytic core - and F(0) - the membrane proton channel. F(1) has five subunits: alpha(3), beta(3), gamma(1), delta(1), epsilon(1). F(0) has three main subunits: a(1), b(2) and c(10-14). The alpha and beta chains form an alternating ring which encloses part of the gamma chain. F(1) is attached to F(0) by a central stalk formed by the gamma and epsilon chains, while a peripheral stalk is formed by the delta and b chains.

It is found in the cell inner membrane. Its function is as follows. F(1)F(0) ATP synthase produces ATP from ADP in the presence of a proton or sodium gradient. F-type ATPases consist of two structural domains, F(1) containing the extramembraneous catalytic core and F(0) containing the membrane proton channel, linked together by a central stalk and a peripheral stalk. During catalysis, ATP synthesis in the catalytic domain of F(1) is coupled via a rotary mechanism of the central stalk subunits to proton translocation. This protein is part of the stalk that links CF(0) to CF(1). It either transmits conformational changes from CF(0) to CF(1) or is implicated in proton conduction. The protein is ATP synthase subunit delta of Brucella abortus (strain S19).